A 1051-amino-acid polypeptide reads, in one-letter code: Transcription intermediary factor 1-alpha (1051 aa).

Residues 1–42 (MEVAVEKAAAAAAPAGGPAAAAPSGENEAESRQGPDSESGGE) form a disordered region. K7 is covalently cross-linked (Glycyl lysine isopeptide (Lys-Gly) (interchain with G-Cter in SUMO2)). Positions 8-23 (AAAAAAPAGGPAAAAP) are enriched in low complexity. Residues 52–77 (CAVCHQNIQSRVPKLLPCLHSFCQRC) form an RING-type zinc finger. The tract at residues 94–115 (SAETPPPAPAPAPAPGSPAGGP) is disordered. Phosphothreonine is present on T97. The span at 97–109 (TPPPAPAPAPAPG) shows a compositional bias: pro residues. S110 is subject to Phosphoserine. 2 consecutive B box-type zinc fingers follow at residues 158–211 (KSNQ…VSPE) and 218–259 (QRPV…YQFI). Positions 163, 166, 187, and 200 each coordinate Zn(2+). Residue K205 forms a Glycyl lysine isopeptide (Lys-Gly) (interchain with G-Cter in SUMO2) linkage. Residues C223, H226, C246, and H251 each coordinate Zn(2+). A Glycyl lysine isopeptide (Lys-Gly) (interchain with G-Cter in SUMO2) cross-link involves residue K276. The stretch at 289–359 (NQIQNRIIEI…AGLSKQLEHV (71 aa)) forms a coiled coil. The segment at 429-457 (ESQPQMPKQNPVVEQSSQPPGGLPSNQLS) is disordered. Residues 431 to 457 (QPQMPKQNPVVEQSSQPPGGLPSNQLS) show a composition bias toward polar residues. Glycyl lysine isopeptide (Lys-Gly) (interchain with G-Cter in SUMO2) cross-links involve residues K436 and K458. Position 469 is an omega-N-methylarginine (R469). 2 stretches are compositionally biased toward low complexity: residues 479–490 (AQRQQVQRRPAP) and 501–510 (PIQQPSISHQ). The segment at 479–551 (AQRQQVQRRP…PSQNVPRQTT (73 aa)) is disordered. Positions 526 to 535 (PNGPVLPPYP) are enriched in pro residues. The segment covering 538–551 (LRYSPSQNVPRQTT) has biased composition (polar residues). Residues K553 and K642 each participate in a glycyl lysine isopeptide (Lys-Gly) (interchain with G-Cter in SUMO2) cross-link. The interval 644 to 713 (TGVDHAQPRP…PAGADSTHKV (70 aa)) is disordered. S655, S661, and S668 each carry phosphoserine. The span at 655–667 (SNRTVQSPNSSVP) shows a compositional bias: polar residues. The segment covering 686–708 (SPSASSVGSRGSSGSSSKPAGAD) has biased composition (low complexity). Residues K703 and K712 each participate in a glycyl lysine isopeptide (Lys-Gly) (interchain with G-Cter in SUMO2) cross-link. Glycyl lysine isopeptide (Lys-Gly) (interchain with G-Cter in SUMO); alternate cross-links involve residues K724 and K742. K724 participates in a covalent cross-link: Glycyl lysine isopeptide (Lys-Gly) (interchain with G-Cter in SUMO1); alternate. Residues K724 and K742 each participate in a glycyl lysine isopeptide (Lys-Gly) (interchain with G-Cter in SUMO2); alternate cross-link. Residues S745 and S769 each carry the phosphoserine modification. The nuclear receptor binding site (NRBS) stretch occupies residues 755 to 780 (NYPRSILTSLLLNSSQSSASEETVLR). Positions 771–827 (SSASEETVLRSDAPDSTGDQPGLHQENSSNGKSEWSDASQKSPVHVGETRKEDDPNE) are disordered. Polar residues predominate over residues 795 to 812 (QENSSNGKSEWSDASQKS). Residue K802 forms a Glycyl lysine isopeptide (Lys-Gly) (interchain with G-Cter in SUMO2) linkage. S809 is subject to Phosphoserine. K811 participates in a covalent cross-link: Glycyl lysine isopeptide (Lys-Gly) (interchain with G-Cter in SUMO2). S812 carries the post-translational modification Phosphoserine. T819 is subject to Phosphothreonine. A PHD-type zinc finger spans residues 827–874 (EDWCAVCQNGGELLCCEKCPKVFHLTCHVPTLTNFPSGEWICTFCRDL). Residues 835-841 (NGGELLC) form an interaction with histone H3 that is not methylated at 'Lys-4' (H3K4me0) region. Residue K876 forms a Glycyl lysine isopeptide (Lys-Gly) (interchain with G-Cter in SUMO2) linkage. The short motif at 892–908 (KRKSEGLTKLTPIDKRK) is the Nuclear localization signal element. A Bromo domain is found at 900–1005 (KLTPIDKRKC…SYFEELLKNL (106 aa)). Residues K950 and K993 each participate in a glycyl lysine isopeptide (Lys-Gly) (interchain with G-Cter in SUMO2) cross-link. Residues 1024–1051 (KFSDDSDDDFVQPRKKRLKSTEDRQLLK) form a disordered region. S1026 and S1029 each carry phosphoserine. Residue K1042 forms a Glycyl lysine isopeptide (Lys-Gly) (interchain with G-Cter in SUMO2) linkage. Over residues 1042 to 1051 (KSTEDRQLLK) the composition is skewed to basic and acidic residues. S1043 is modified (phosphoserine).

As to quaternary structure, interacts (via bromo domain) with histone H3 (via N-terminus), provided that it is not methylated at 'Lys-4' (H3K4me0). Does not interact with histone H3 that is methylated at 'Lys-4' (H3K4me1, H3K4me2 or H3K4me3). Interacts (via bromo domain) with histone H3 (via N-terminus) that is acetylated at 'Lys-23' (H3K23ac). Has the highest affinity for histone H3 that is both unmodified at 'Lys-4' (H3K4me0) and acetylated at 'Lys-23' (H3K23ac). Has very low affinity for histone H3 that is methylated at 'Lys-9' (H3K9me), or acetylated at both 'Lys-9' (H3K9ac) and 'Lys-14' (H3K14ac), or acetylated at 'Lys-27' (H3K27ac) (in vitro). Interacts with TRIM16. Interacts with NR3C2/MCR. Interacts with the ligand-binding domain of estrogen receptors (in vitro). Interaction with DNA-bound estrogen receptors requires the presence of estradiol. Interacts with AR, CARM1, KAT5/TIP60, NCOA2/GRIP1, BRD7, CBX1, CBX3 and CBX5. Part of a coactivator complex containing TRIM24, NCOA2/GRIP1 and CARM1. Interacts with p53/TP53 and PML. Post-translationally, sumoylated. Phosphorylated at Ser-768 by ATM kinase induces ubiquitination and degradation during DNA damage. In terms of processing, undergoes ubiquitination-mediated degradation in response to DNA damage. In terms of tissue distribution, detected in embryonic and adult liver. Detected in zygote and throughout embryogenesis (at protein level). Detected in all adult tissues, with the highest expression level in testis.

Its subcellular location is the nucleus. It localises to the cytoplasm. It carries out the reaction S-ubiquitinyl-[E2 ubiquitin-conjugating enzyme]-L-cysteine + [acceptor protein]-L-lysine = [E2 ubiquitin-conjugating enzyme]-L-cysteine + N(6)-ubiquitinyl-[acceptor protein]-L-lysine.. It participates in protein modification; protein ubiquitination. Functionally, transcriptional coactivator that interacts with numerous nuclear receptors and coactivators and modulates the transcription of target genes. Interacts with chromatin depending on histone H3 modifications, having the highest affinity for histone H3 that is both unmodified at 'Lys-4' (H3K4me0) and acetylated at 'Lys-23' (H3K23ac). Has E3 protein-ubiquitin ligase activity. Promotes ubiquitination and proteasomal degradation of p53/TP53. Plays a role in the regulation of cell proliferation and apoptosis via its effects on p53/TP53 levels. Up-regulates ligand-dependent transcription activation by AR, GCR/NR3C1, thyroid hormone receptor (TR) and ESR1. Modulates transcription activation by retinoic acid (RA) receptors, such as RARA. Plays a role in regulating retinoic acid-dependent proliferation of hepatocytes. Required for normal transition from proliferating neonatal hepatocytes to quiescent adult hepatocytes. In terms of biological role, transcriptional coactivator that interacts with numerous nuclear receptors and coactivators and modulates the transcription of target genes. Interacts with chromatin depending on histone H3 modifications, having the highest affinity for histone H3 that is both unmodified at 'Lys-4' (H3K4me0) and acetylated at 'Lys-23' (H3K23ac). Has E3 protein-ubiquitin ligase activity. During the DNA damage response, participates in an autoregulatory feedback loop with TP53. Early in response to DNA damage, ATM kinase phosphorylates TRIM24 leading to its ubiquitination and degradation. After sufficient DNA repair has occurred, TP53 activates TRIM24 transcription, ultimately leading to TRIM24-mediated TP53 ubiquitination and degradation. Plays a role in the regulation of cell proliferation and apoptosis, at least in part via its effects on p53/TP53 levels. Up-regulates ligand-dependent transcription activation by AR, GCR/NR3C1, thyroid hormone receptor (TR) and ESR1. Modulates transcription activation by retinoic acid (RA) receptors, including RARA. Plays a role in regulating retinoic acid-dependent proliferation of hepatocytes. Also participates in innate immunity by mediating the specific 'Lys-63'-linked ubiquitination of TRAF3 leading to activation of downstream signal transduction of the type I IFN pathway. Additionally, negatively regulates NLRP3/CASP1/IL-1beta-mediated pyroptosis and cell migration probably by ubiquitinating NLRP3. The polypeptide is Transcription intermediary factor 1-alpha (Trim24) (Mus musculus (Mouse)).